The following is a 206-amino-acid chain: Riboflavin transporter RibU (206 aa).

6 helical membrane-spanning segments follow: residues 7–27, 42–62, 79–99, 113–133, 147–169, and 173–195; these read MVLI…ILQF, IIPV…IILF, WIGV…VWFF, IVLA…FYAL, IFAG…PTYL, and VLPF…VTVF.

The protein belongs to the prokaryotic riboflavin transporter (P-RFT) (TC 2.A.87) family. In terms of assembly, in E.coli forms a stable energy-coupling factor (ECF) transporter complex composed of 2 membrane-embedded substrate-binding protein (S component), 2 ATP-binding proteins (A and A' components) and 2 transmembrane proteins (T component), probably with a stoichiometry of 2:1:1:2. May be able to interact with more than 1 S component at a time.

It localises to the cell membrane. Its function is as follows. Mediates riboflavin uptake, may also transport FMN and roseoflavin. Probably a riboflavin-binding protein that interacts with the energy-coupling factor (ECF) ABC-transporter complex. Unlike classic ABC transporters this ECF transporter provides the energy necessary to transport a number of different substrates. The substrates themselves are bound by transmembrane, not extracytoplasmic soluble proteins. Uptake of riboflavin into proteosomes containing EcfA1A2T and RibU has been demonstrated. Uptake requires hydrolyzable Mg-ATP. This is Riboflavin transporter RibU (ribU) from Lactococcus lactis subsp. cremoris (strain MG1363).